The chain runs to 442 residues: Trigger factor (442 aa).

The region spanning Gly162–Thr247 is the PPIase FKBP-type domain.

This sequence belongs to the FKBP-type PPIase family. Tig subfamily.

The protein localises to the cytoplasm. It carries out the reaction [protein]-peptidylproline (omega=180) = [protein]-peptidylproline (omega=0). In terms of biological role, involved in protein export. Acts as a chaperone by maintaining the newly synthesized protein in an open conformation. Functions as a peptidyl-prolyl cis-trans isomerase. The polypeptide is Trigger factor (Rickettsia canadensis (strain McKiel)).